Consider the following 73-residue polypeptide: YFSYNDKVIKILEAEYLNTNHHFTAGTVISDKLEIACGSGILQVQKLQQESKKALNVEEFLRGTNILKATILK.

This sequence belongs to the Fmt family.

It catalyses the reaction L-methionyl-tRNA(fMet) + (6R)-10-formyltetrahydrofolate = N-formyl-L-methionyl-tRNA(fMet) + (6S)-5,6,7,8-tetrahydrofolate + H(+). In terms of biological role, attaches a formyl group to the free amino group of methionyl-tRNA(fMet). The formyl group appears to play a dual role in the initiator identity of N-formylmethionyl-tRNA by promoting its recognition by IF2 and preventing the misappropriation of this tRNA by the elongation apparatus. The protein is Methionyl-tRNA formyltransferase (fmt) of Rickettsia australis.